Consider the following 393-residue polypeptide: Potassium channel subfamily K member 4 (393 aa).

The Cytoplasmic segment spans residues 1–3 (MRS). The chain crosses the membrane as a helical span at residues 4-24 (TTLLALLALVLLYLVSGALVF). Over 25–87 (RALEQPHEQQ…NSTSNSSHSA (63 aa)) the chain is Extracellular. N-linked (GlcNAc...) asparagine glycans are attached at residues N78 and N82. The helical intramembrane region spans 88-102 (WDLGSAFFFSGTIIT). The K(+) site is built by T103, I104, G105, and Y106. A selectivity filter 1 region spans residues 103–108 (TIGYGN). The stretch at 103 to 109 (TIGYGNV) is an intramembrane region. Topologically, residues 110–117 (ALRTDAGR) are extracellular. The chain crosses the membrane as a helical span at residues 118 to 150 (LFCIFYALVGIPLFGILLAGVGDRLGSSLRHGI). Residues 151–172 (GHIEAIFLKWHVPPELVRVLSA) lie on the Cytoplasmic side of the membrane. The chain crosses the membrane as a helical span at residues 173–194 (MLFLLIGCLLFVLTPTFVFCYM). The Extracellular segment spans residues 195-199 (EDWSK). The helical intramembrane region spans 200–213 (LEAIYFVIVTLTTV). K(+)-binding residues include T212, V213, G214, and F215. The interval 212 to 217 (TVGFGD) is selectivity filter 2. An intramembrane segment occupies 214 to 219 (GFGDYV). Topologically, residues 220–233 (AGADPRQDSPAYQP) are extracellular. The helical transmembrane segment at 234–260 (LVWFWILLGLAYFASVLTTIGNWLRVV) threads the bilayer. Residues 261-393 (SRRTRAEMGG…GRPRDKGVPV (133 aa)) are Cytoplasmic-facing. The disordered stretch occupies residues 285–393 (RVTQRAGPAA…GRPRDKGVPV (109 aa)). Pro residues predominate over residues 319-332 (SPSPPEKAQPPSPP). Basic residues predominate over residues 365–384 (PRGRRRPNPPRKPVRPRGPG).

This sequence belongs to the two pore domain potassium channel (TC 1.A.1.8) family. Homodimer; disulfide-linked. Forms heterodimers with other 2-pore domain K(+) channel subunits, such as KCNK2 and KCNK10. In terms of processing, N-glycosylated.

The protein resides in the cell membrane. The protein localises to the cell projection. It localises to the axon. It carries out the reaction K(+)(in) = K(+)(out). The enzyme catalyses Rb(+)(in) = Rb(+)(out). It catalyses the reaction Cs(+)(in) = Cs(+)(out). With respect to regulation, activated by mechanical stretch and arachidonic acid. K(+) channel that conducts voltage-dependent outward rectifying currents upon membrane depolarization. Voltage sensing is coupled to K(+) electrochemical gradient in an 'ion flux gating' mode where outward but not inward ion flow opens the gate. Converts to voltage-independent 'leak' conductance mode upon stimulation by various stimuli including mechanical membrane stretch, basic pH, heat and lipids. Homo- and heterodimerizes to form functional channels with distinct regulatory and gating properties. At trigeminal A-beta afferent nerves, the heterodimer of KCNK2/TREK-1 and KCNK4/TRAAK is mostly coexpressed at nodes of Ranvier where it conducts voltage-independent mechanosensitive and thermosensitive currents, allowing rapid action potential repolarization, high speed and high frequence saltatory conduction on myelinated nerves to ensure prompt sensory responses. Permeable to other monovalent cations such as Rb(+) and Cs(+). This Homo sapiens (Human) protein is Potassium channel subfamily K member 4.